A 184-amino-acid polypeptide reads, in one-letter code: Calmodulin-related protein (184 aa).

4 consecutive EF-hand domains span residues 8-43 (DQIS…LGQN), 44-79 (PTEA…KMKD), 81-116 (DSEE…LGEK), and 117-152 (LTDE…NRRR). Ca(2+)-binding residues include Asp-21, Asp-23, Asp-25, Cys-27, Glu-32, Asp-57, Asp-59, Asn-61, Thr-63, Glu-68, Asp-94, Asp-96, Asn-98, and Glu-105. Lys-116 carries the N6,N6,N6-trimethyllysine modification. 5 residues coordinate Ca(2+): Asp-130, Asp-132, Asp-134, Gln-136, and Glu-141. The disordered stretch occupies residues 156 to 184 (EESKRSVNSNISRSNNGRKVRKRDRCTIL). The segment covering 161–170 (SVNSNISRSN) has biased composition (low complexity). A compositionally biased stretch (basic residues) spans 171-184 (NGRKVRKRDRCTIL).

This sequence belongs to the calmodulin family.

Functionally, calmodulin mediates the control of a large number of enzymes, ion channels and other proteins by Ca(2+). Among the enzymes to be stimulated by the calmodulin-Ca(2+) complex are a number of protein kinases and phosphatases. This Petunia hybrida (Petunia) protein is Calmodulin-related protein (CAM53).